Consider the following 310-residue polypeptide: Isoaspartyl peptidase/L-asparaginase (310 aa).

Threonine 167 (nucleophile) is an active-site residue. Residues 195 to 198 (RVGD) and 218 to 221 (TGHG) each bind substrate.

It belongs to the Ntn-hydrolase family. Heterodimer of an alpha and beta chain produced by autocleavage. In terms of processing, cleaved into an alpha and beta chain by autocatalysis; this activates the enzyme. The N-terminal residue of the beta subunit is responsible for the nucleophile hydrolase activity.

Its subcellular location is the cytoplasm. It catalyses the reaction L-asparagine + H2O = L-aspartate + NH4(+). The catalysed reaction is Cleavage of a beta-linked Asp residue from the N-terminus of a polypeptide.. Functionally, has both L-asparaginase and beta-aspartyl peptidase activity. Does not have aspartylglucosaminidase activity and is inactive toward GlcNAc-L-Asn. Likewise, has no activity toward glutamine. This Danio rerio (Zebrafish) protein is Isoaspartyl peptidase/L-asparaginase (asrgl1).